Here is a 1040-residue protein sequence, read N- to C-terminus: Alpha-mannosidase 2C1 (1040 aa).

Co(2+) contacts are provided by H260, D262, D372, and H577. The Nucleophile role is filled by D372.

The protein belongs to the glycosyl hydrolase 38 family. It depends on Co(2+) as a cofactor.

It localises to the cytoplasm. It carries out the reaction Hydrolysis of terminal, non-reducing alpha-D-mannose residues in alpha-D-mannosides.. With respect to regulation, strongly inhibited by swainsonine. Also inhibited to a lesser extent by deoxymannojirimycin (DMM). Functionally, cleaves alpha 1,2-, alpha 1,3-, and alpha 1,6-linked mannose residues on cytoplasmic free oligosaccharides generated by N-glycoprotein degradation pathways. The protein is Alpha-mannosidase 2C1 (MAN2C1) of Homo sapiens (Human).